Here is a 239-residue protein sequence, read N- to C-terminus: Chaperone protein PapD (239 aa).

Residues Met-1 to Ala-21 form the signal peptide. A disulfide bridge connects residues Cys-228 and Cys-233.

It belongs to the periplasmic pilus chaperone family. Interacts with substrates PapG and PapK.

It is found in the periplasm. Its function is as follows. Binds and caps interactive surfaces on P pilus subunits to prevent them from participating in non-productive interactions. Facilitates the import of P pilus subunits into the periplasm, probably also facilitates their folding. Chaperone-subunit complexes are then targeted to the PapC outer membrane usher where the chaperone must uncap from the subunits. Coexpression of this chaperone with individual, otherwise toxic, P pilus subunits (tested with PapA, PapE and PapG) suppresses their growth inhibitory phenotype. In Escherichia coli, this protein is Chaperone protein PapD (papD).